The chain runs to 178 residues: ATP synthase subunit b, chloroplastic (178 aa).

A helical membrane pass occupies residues 23–43; it reads IFETNIINLAAVVAIVISFVG.

The protein belongs to the ATPase B chain family. As to quaternary structure, F-type ATPases have 2 components, F(1) - the catalytic core - and F(0) - the membrane proton channel. F(1) has five subunits: alpha(3), beta(3), gamma(1), delta(1), epsilon(1). F(0) has four main subunits: a(1), b(1), b'(1) and c(10-14). The alpha and beta chains form an alternating ring which encloses part of the gamma chain. F(1) is attached to F(0) by a central stalk formed by the gamma and epsilon chains, while a peripheral stalk is formed by the delta, b and b' chains.

It is found in the plastid. Its subcellular location is the chloroplast thylakoid membrane. Its function is as follows. F(1)F(0) ATP synthase produces ATP from ADP in the presence of a proton or sodium gradient. F-type ATPases consist of two structural domains, F(1) containing the extramembraneous catalytic core and F(0) containing the membrane proton channel, linked together by a central stalk and a peripheral stalk. During catalysis, ATP synthesis in the catalytic domain of F(1) is coupled via a rotary mechanism of the central stalk subunits to proton translocation. Component of the F(0) channel, it forms part of the peripheral stalk, linking F(1) to F(0). The sequence is that of ATP synthase subunit b, chloroplastic from Tetradesmus obliquus (Green alga).